The chain runs to 23 residues: Potassium channel toxin alpha-KTx 13.1 (23 aa).

3 disulfides stabilise this stretch: cysteine 2-cysteine 15, cysteine 5-cysteine 20, and cysteine 9-cysteine 22. The interaction with Ca(2+)-activated K(+) channels stretch occupies residues 13–20; that stretch reads GKCINGRC.

As to expression, expressed by the venom gland.

The protein localises to the secreted. In terms of biological role, blocks reversibly Shaker B potassium channels. Also displaces binding of noxiustoxin to mouse brain synaptosome membranes. The protein is Potassium channel toxin alpha-KTx 13.1 of Tityus obscurus (Amazonian scorpion).